Here is a 296-residue protein sequence, read N- to C-terminus: Bifunctional protein FolD (296 aa).

NADP(+) contacts are provided by residues 168 to 170 (GRS), Thr-197, and Val-238.

This sequence belongs to the tetrahydrofolate dehydrogenase/cyclohydrolase family. As to quaternary structure, homodimer.

The enzyme catalyses (6R)-5,10-methylene-5,6,7,8-tetrahydrofolate + NADP(+) = (6R)-5,10-methenyltetrahydrofolate + NADPH. The catalysed reaction is (6R)-5,10-methenyltetrahydrofolate + H2O = (6R)-10-formyltetrahydrofolate + H(+). It functions in the pathway one-carbon metabolism; tetrahydrofolate interconversion. Catalyzes the oxidation of 5,10-methylenetetrahydrofolate to 5,10-methenyltetrahydrofolate and then the hydrolysis of 5,10-methenyltetrahydrofolate to 10-formyltetrahydrofolate. The polypeptide is Bifunctional protein FolD (Desulfotalea psychrophila (strain LSv54 / DSM 12343)).